We begin with the raw amino-acid sequence, 451 residues long: MGLDIVLFRADKGGNPDLIRQSQKVRYANVDAVQEVIDLDKVVKETKYRLDNTNAEYAKLNKSVAMKKKAGESADEIIAQAEELNQSIIKLKAEVSEVELLLRKKLRPIGNIVHESVPIDNNEDNNQIIKTWGECKTSEGLLHHHELLEMIDGYDPERGTLVSGHRCYFLKGIGVLLNQAIINFALMHMTKRGSVPLQTPFFMNKDVMAKTAQLEQFDDELYKVTGDNEEKYLIATSEQPISAFHQDEWIEEKDLPKKYVGYSTCFRKEAGSHGRDTWGIFRVHQFEKIEQFCITEPEKSWDMMEEMINNSEQFYQELGIPYRVVNIVSGALNNAASKKYDLEGWFPGYNQYRELVSCSNCTDYQSRDLEIRCGMKKQGQQQKKYVHMLNSTLAATTRVICCILENYQTEGGITVPVPLRPYLGKDFIPFVKAAPKQKAIPKQKTTTPEQK.

236-238 (TSE) serves as a coordination point for L-serine. ATP contacts are provided by residues 267–269 (RKE) and Val283. Residue Glu290 participates in L-serine binding. 354 to 357 (ELVS) contributes to the ATP binding site. Residue Thr392 participates in L-serine binding.

The protein belongs to the class-II aminoacyl-tRNA synthetase family. Type-1 seryl-tRNA synthetase subfamily. In terms of assembly, homodimer. The tRNA molecule binds across the dimer.

The protein resides in the cytoplasm. The catalysed reaction is tRNA(Ser) + L-serine + ATP = L-seryl-tRNA(Ser) + AMP + diphosphate + H(+). The enzyme catalyses tRNA(Sec) + L-serine + ATP = L-seryl-tRNA(Sec) + AMP + diphosphate + H(+). Its pathway is aminoacyl-tRNA biosynthesis; selenocysteinyl-tRNA(Sec) biosynthesis; L-seryl-tRNA(Sec) from L-serine and tRNA(Sec): step 1/1. Catalyzes the attachment of serine to tRNA(Ser). Is also able to aminoacylate tRNA(Sec) with serine, to form the misacylated tRNA L-seryl-tRNA(Sec), which will be further converted into selenocysteinyl-tRNA(Sec). This Dictyostelium discoideum (Social amoeba) protein is Serine--tRNA ligase, cytoplasmic (serS).